The following is a 583-amino-acid chain: Pectinesterase/pectinesterase inhibitor U1 (583 aa).

A signal peptide spans 1–40; that stretch reads MTRVEDFFSKQIDFCKRKKKIYLAIVASVLLVAAVIGVVA. A pectinesterase inhibitor U1 region spans residues 60 to 221; the sequence is SSAHAIVKSA…EKMCSNALAM (162 aa). 3 N-linked (GlcNAc...) asparagine glycosylation sites follow: Asn85, Asn105, and Asn224. The segment at 272 to 570 is pectinesterase U1; sequence DVVVAADGSG…TPGRFIAGGS (299 aa). The substrate site is built by Thr347 and Gln377. Asp400 functions as the Proton donor; for pectinesterase activity in the catalytic mechanism. An intrachain disulfide couples Cys414 to Cys434. The active-site Nucleophile; for pectinesterase activity is Asp421. Substrate contacts are provided by Arg489 and Trp491.

In the N-terminal section; belongs to the PMEI family. The protein in the C-terminal section; belongs to the pectinesterase family.

It is found in the secreted. It localises to the cell wall. The catalysed reaction is [(1-&gt;4)-alpha-D-galacturonosyl methyl ester](n) + n H2O = [(1-&gt;4)-alpha-D-galacturonosyl](n) + n methanol + n H(+). Its pathway is glycan metabolism; pectin degradation; 2-dehydro-3-deoxy-D-gluconate from pectin: step 1/5. Acts in the modification of cell walls via demethylesterification of cell wall pectin. The sequence is that of Pectinesterase/pectinesterase inhibitor U1 (PMEU1) from Solanum lycopersicum (Tomato).